Reading from the N-terminus, the 329-residue chain is Malate dehydrogenase (329 aa).

An NAD(+)-binding site is contributed by 12-18; that stretch reads GAAGQIG. Positions 93 and 99 each coordinate substrate. Residues asparagine 106, glutamine 113, and 130-132 each bind NAD(+); that span reads TGN. Residues asparagine 132 and arginine 163 each contribute to the substrate site. Histidine 188 functions as the Proton acceptor in the catalytic mechanism.

The protein belongs to the LDH/MDH superfamily. MDH type 2 family.

It catalyses the reaction (S)-malate + NAD(+) = oxaloacetate + NADH + H(+). In terms of biological role, catalyzes the reversible oxidation of malate to oxaloacetate. The chain is Malate dehydrogenase from Mycobacterium leprae (strain TN).